Here is a 1152-residue protein sequence, read N- to C-terminus: DNA-directed RNA polymerase subunit beta (1152 aa).

It belongs to the RNA polymerase beta chain family. As to quaternary structure, the RNAP catalytic core consists of 2 alpha, 1 beta, 1 beta' and 1 omega subunit. When a sigma factor is associated with the core the holoenzyme is formed, which can initiate transcription.

It catalyses the reaction RNA(n) + a ribonucleoside 5'-triphosphate = RNA(n+1) + diphosphate. DNA-dependent RNA polymerase catalyzes the transcription of DNA into RNA using the four ribonucleoside triphosphates as substrates. This chain is DNA-directed RNA polymerase subunit beta, found in Deinococcus geothermalis (strain DSM 11300 / CIP 105573 / AG-3a).